The chain runs to 604 residues: Procollagen galactosyltransferase 1 (604 aa).

The signal sequence occupies residues M1–S18. 4 N-linked (GlcNAc...) asparagine glycosylation sites follow: N78, N166, N363, and N561. The segment covering R570–E580 has biased composition (basic and acidic residues). The interval R570–L604 is disordered. Positions S584–D597 are enriched in polar residues. The short motif at R601–L604 is the Prevents secretion from ER element.

It belongs to the glycosyltransferase 25 family.

It localises to the endoplasmic reticulum lumen. The enzyme catalyses (5R)-5-hydroxy-L-lysyl-[collagen] + UDP-alpha-D-galactose = (5R)-5-O-(beta-D-galactosyl)-5-hydroxy-L-lysyl-[collagen] + UDP + H(+). In terms of biological role, beta-galactosyltransferase that transfers beta-galactose to hydroxylysine residues of type I collagen. By acting on collagen glycosylation, facilitates the formation of collagen triple helix. The protein is Procollagen galactosyltransferase 1 (colgalt1) of Danio rerio (Zebrafish).